The following is a 77-amino-acid chain: Small ribosomal subunit protein bS18 (77 aa).

This sequence belongs to the bacterial ribosomal protein bS18 family. As to quaternary structure, part of the 30S ribosomal subunit. Forms a tight heterodimer with protein bS6.

Functionally, binds as a heterodimer with protein bS6 to the central domain of the 16S rRNA, where it helps stabilize the platform of the 30S subunit. In Bacillus cytotoxicus (strain DSM 22905 / CIP 110041 / 391-98 / NVH 391-98), this protein is Small ribosomal subunit protein bS18.